A 172-amino-acid polypeptide reads, in one-letter code: Adenine phosphoribosyltransferase (172 aa).

This sequence belongs to the purine/pyrimidine phosphoribosyltransferase family. Homodimer.

It localises to the cytoplasm. It carries out the reaction AMP + diphosphate = 5-phospho-alpha-D-ribose 1-diphosphate + adenine. It functions in the pathway purine metabolism; AMP biosynthesis via salvage pathway; AMP from adenine: step 1/1. Its function is as follows. Catalyzes a salvage reaction resulting in the formation of AMP, that is energically less costly than de novo synthesis. The polypeptide is Adenine phosphoribosyltransferase (Staphylococcus aureus (strain bovine RF122 / ET3-1)).